Here is a 297-residue protein sequence, read N- to C-terminus: Nucleotide-binding protein Bxeno_A0336 (297 aa).

Residue G8–S15 participates in ATP binding. D57–S60 provides a ligand contact to GTP.

The protein belongs to the RapZ-like family.

Its function is as follows. Displays ATPase and GTPase activities. The protein is Nucleotide-binding protein Bxeno_A0336 of Paraburkholderia xenovorans (strain LB400).